The chain runs to 443 residues: Chromosome partition protein MukF (443 aa).

The leucine-zipper stretch occupies residues Leu-209–Ile-237.

This sequence belongs to the MukF family. As to quaternary structure, interacts, and probably forms a ternary complex, with MukE and MukB via its C-terminal region. The complex formation is stimulated by calcium or magnesium. It is required for an interaction between MukE and MukB.

Its subcellular location is the cytoplasm. The protein resides in the nucleoid. Involved in chromosome condensation, segregation and cell cycle progression. May participate in facilitating chromosome segregation by condensation DNA from both sides of a centrally located replisome during cell division. Not required for mini-F plasmid partitioning. Probably acts via its interaction with MukB and MukE. Overexpression results in anucleate cells. It has a calcium binding activity. This is Chromosome partition protein MukF from Actinobacillus pleuropneumoniae serotype 5b (strain L20).